A 473-amino-acid chain; its full sequence is Glutamyl-tRNA reductase (473 aa).

Substrate contacts are provided by residues 49–52, S109, 114–116, and Q120; these read TCNR and ESQ. The active-site Nucleophile is C50. The disordered stretch occupies residues 196-215; the sequence is LDGGGVAAEGPRHAVTPEPP. 226 to 231 serves as a coordination point for NADP(+); it reads GAGAVG.

It belongs to the glutamyl-tRNA reductase family. As to quaternary structure, homodimer.

The catalysed reaction is (S)-4-amino-5-oxopentanoate + tRNA(Glu) + NADP(+) = L-glutamyl-tRNA(Glu) + NADPH + H(+). It participates in porphyrin-containing compound metabolism; protoporphyrin-IX biosynthesis; 5-aminolevulinate from L-glutamyl-tRNA(Glu): step 1/2. Functionally, catalyzes the NADPH-dependent reduction of glutamyl-tRNA(Glu) to glutamate 1-semialdehyde (GSA). In Frankia casuarinae (strain DSM 45818 / CECT 9043 / HFP020203 / CcI3), this protein is Glutamyl-tRNA reductase.